The sequence spans 307 residues: Manganese-dependent inorganic pyrophosphatase (307 aa).

Mn(2+) is bound by residues His7, Asp11, Asp13, Asp66, His88, and Asp147.

Mn(2+) is required as a cofactor.

The protein localises to the cytoplasm. The enzyme catalyses diphosphate + H2O = 2 phosphate + H(+). This Methanocaldococcus jannaschii (strain ATCC 43067 / DSM 2661 / JAL-1 / JCM 10045 / NBRC 100440) (Methanococcus jannaschii) protein is Manganese-dependent inorganic pyrophosphatase (ppaC).